A 305-amino-acid polypeptide reads, in one-letter code: Translation initiation factor eIF2B subunit alpha (305 aa).

Lysine 35 is subject to N6-acetyllysine.

The protein belongs to the eIF-2B alpha/beta/delta subunits family. As to quaternary structure, component of the translation initiation factor 2B (eIF2B) complex which is a heterodecamer of two sets of five different subunits: alpha, beta, gamma, delta and epsilon. Subunits alpha, beta and delta comprise a regulatory subcomplex and subunits epsilon and gamma comprise a catalytic subcomplex. Within the complex, the hexameric regulatory complex resides at the center, with the two heterodimeric catalytic subcomplexes bound on opposite sides.

It localises to the cytoplasm. The protein resides in the cytosol. With respect to regulation, activated by the chemical integrated stress response (ISR) inhibitor ISRIB which stimulates guanine nucleotide exchange factor activity for both phosphorylated and unphosphorylated eIF2. Acts as a component of the translation initiation factor 2B (eIF2B) complex, which catalyzes the exchange of GDP for GTP on eukaryotic initiation factor 2 (eIF2) gamma subunit. Its guanine nucleotide exchange factor activity is repressed when bound to eIF2 complex phosphorylated on the alpha subunit, thereby limiting the amount of methionyl-initiator methionine tRNA available to the ribosome and consequently global translation is repressed. In Rattus norvegicus (Rat), this protein is Translation initiation factor eIF2B subunit alpha (Eif2b1).